The chain runs to 219 residues: Flagellin A (219 aa).

The propeptide occupies 1–12 (MKVKEFMNNKKG). N-linked (GlcNAc...) asparagine glycosylation is found at Asn38 and Asn175.

The protein belongs to the archaeal flagellin family. N-linked glycans consist of the 779 Da trisaccharide beta-ManNAc(Thr)-(1-4)-beta-GlcNAc3NAcA-(1-3)-beta-GlcNAc.

Its subcellular location is the archaeal flagellum. Its function is as follows. Flagellin is the subunit protein which polymerizes to form the filaments of archaeal flagella. In Methanococcus voltae, this protein is Flagellin A (flaA).